A 336-amino-acid chain; its full sequence is N-acetyl-gamma-glutamyl-phosphate reductase (336 aa).

Residue cysteine 148 is part of the active site.

It belongs to the NAGSA dehydrogenase family. Type 1 subfamily.

It is found in the cytoplasm. It catalyses the reaction N-acetyl-L-glutamate 5-semialdehyde + phosphate + NADP(+) = N-acetyl-L-glutamyl 5-phosphate + NADPH + H(+). Its pathway is amino-acid biosynthesis; L-arginine biosynthesis; N(2)-acetyl-L-ornithine from L-glutamate: step 3/4. Catalyzes the NADPH-dependent reduction of N-acetyl-5-glutamyl phosphate to yield N-acetyl-L-glutamate 5-semialdehyde. The protein is N-acetyl-gamma-glutamyl-phosphate reductase of Campylobacter curvus (strain 525.92).